The sequence spans 82 residues: Penaeidin-3i (82 aa).

Positions 1–19 (MRLVVCLVFLASFALVCQG) are cleaved as a signal peptide. At Gln-20 the chain carries Pyrrolidone carboxylic acid. 2 cysteine pairs are disulfide-bonded: Cys-55–Cys-73 and Cys-67–Cys-74. A Serine amide modification is found at Ser-81.

Belongs to the penaeidin family.

It is found in the cytoplasmic granule. In terms of biological role, antibacterial and antifungal activity. Presents chitin-binding activity. This is Penaeidin-3i from Penaeus vannamei (Whiteleg shrimp).